Here is a 506-residue protein sequence, read N- to C-terminus: Cytochrome P450 4B1 (506 aa).

Glutamate 310 serves as a coordination point for heme. Serine 431 carries the phosphoserine modification. Cysteine 448 provides a ligand contact to heme.

This sequence belongs to the cytochrome P450 family. Heme is required as a cofactor.

The protein localises to the endoplasmic reticulum membrane. It localises to the microsome membrane. It catalyses the reaction an organic molecule + reduced [NADPH--hemoprotein reductase] + O2 = an alcohol + oxidized [NADPH--hemoprotein reductase] + H2O + H(+). Its function is as follows. Cytochromes P450 are a group of heme-thiolate monooxygenases. In liver microsomes, this enzyme is involved in an NADPH-dependent electron transport pathway. It oxidizes a variety of structurally unrelated compounds, including steroids, fatty acids, and xenobiotics. The sequence is that of Cytochrome P450 4B1 (CYP4B1) from Oryctolagus cuniculus (Rabbit).